Reading from the N-terminus, the 84-residue chain is Small ribosomal subunit protein uS17 (84 aa).

It belongs to the universal ribosomal protein uS17 family. In terms of assembly, part of the 30S ribosomal subunit.

In terms of biological role, one of the primary rRNA binding proteins, it binds specifically to the 5'-end of 16S ribosomal RNA. This Clostridium perfringens (strain ATCC 13124 / DSM 756 / JCM 1290 / NCIMB 6125 / NCTC 8237 / Type A) protein is Small ribosomal subunit protein uS17.